The sequence spans 520 residues: Signal peptide peptidase-like 2A (520 aa).

The first 25 residues, 1–25 (MGPQRRLSPAGAALLWGFLLQLTAA), serve as a signal peptide directing secretion. Residues 26-172 (QEAILHASGN…PSWPNFDYTM (147 aa)) lie on the Lumenal side of the membrane. N-linked (GlcNAc...) asparagine glycans are attached at residues asparagine 58, asparagine 66, asparagine 74, asparagine 116, asparagine 126, and asparagine 149. Residues 63 to 151 (SLMNLTSTPL…YKDFRDMNQT (89 aa)) enclose the PA domain. N-linked (GlcNAc...) (complex) asparagine glycosylation occurs at asparagine 155. The helical transmembrane segment at 173–193 (VVIFVIAVFTVALGGYWSGLV) threads the bilayer. The Cytoplasmic segment spans residues 194-220 (ELENLKAVTTEDREMRKKKEEYLTFSP). The helical transmembrane segment at 221–241 (LTVVIFVVICCVMMVLLYFFY) threads the bilayer. Residues 242–247 (KWLVYV) are Lumenal-facing. The chain crosses the membrane as a helical span at residues 248–268 (MIAIFCIASAMSLYNCLAALI). At 269–285 (HKIPYGQCTIACRGKNM) the chain is on the cytoplasmic side. Residues 286–306 (EVRLIFLSGLCIAVAVVWAVF) form a helical membrane-spanning segment. The Lumenal portion of the chain corresponds to 307–311 (RNEDR). The helical transmembrane segment at 312–332 (WAWILQDILGIAFCLNLIKTL) threads the bilayer. Residues 333-340 (KLPNFKSC) are Cytoplasmic-facing. The helical transmembrane segment at 341–361 (VILLGLLLLYDVFFVFITPFI) threads the bilayer. The active site involves aspartate 351. Over 362–399 (TKNGESIMVELAAGPFGNNEKLPVVIRVPKLIYFSVMS) the chain is Lumenal. Residues 400–420 (VCLMPVSILGFGDIIVPGLLI) traverse the membrane as a helical segment. Aspartate 412 is an active-site residue. Residues 421–437 (AYCRRFDVQTGSSYIYY) are Cytoplasmic-facing. Residues 438–458 (VSSTVAYAIGMILTFVVLVLM) form a helical membrane-spanning segment. The Lumenal portion of the chain corresponds to 459 to 460 (KK). Residues 461–481 (GQPALLYLVPCTLITASVVAW) form a helical membrane-spanning segment. The PAL signature appears at 463–465 (PAL). The Cytoplasmic portion of the chain corresponds to 482-520 (RRKEMKKFWKGNSYQMMDHLDCATNEENPVISGEQIVQQ). The YXXo lysosomal targeting motif motif lies at 495–498 (YQMM).

Belongs to the peptidase A22B family. As to quaternary structure, interacts with ITM2B. Glycosylated. As to expression, ubiquitous.

The protein localises to the late endosome membrane. The protein resides in the lysosome membrane. Its subcellular location is the membrane. Its function is as follows. Intramembrane-cleaving aspartic protease (I-CLiP) that cleaves type II membrane signal peptides in the hydrophobic plane of the membrane. Functions in FASLG, ITM2B and TNF processing. Catalyzes the intramembrane cleavage of the anchored fragment of shed TNF-alpha (TNF), which promotes the release of the intracellular domain (ICD) for signaling to the nucleus. Also responsible for the intramembrane cleavage of Fas antigen ligand FASLG, which promotes the release of the intracellular FasL domain (FasL ICD). Essential for degradation of the invariant chain CD74 that plays a central role in the function of antigen-presenting cells in the immune system. Plays a role in the regulation of innate and adaptive immunity. Catalyzes the intramembrane cleavage of the simian foamy virus envelope glycoprotein gp130 independently of prior ectodomain shedding by furin or furin-like proprotein convertase (PC)-mediated cleavage proteolysis. The chain is Signal peptide peptidase-like 2A from Homo sapiens (Human).